A 64-amino-acid polypeptide reads, in one-letter code: Toxin BmCa-1 (64 aa).

The N-terminal stretch at 1–18 (MNTFVVVFLLLTAILCHA) is a signal peptide. Residues 19-27 (EHALDETAR) constitute a propeptide that is removed on maturation. 3 cysteine pairs are disulfide-bonded: Cys-29–Cys-43, Cys-36–Cys-49, and Cys-42–Cys-58.

Belongs to the scorpion calcin-like family. As to expression, expressed by the venom gland.

It is found in the secreted. May increase intracellular calcium release through the activation of nuclear inositol 1,4,5-trisphosphate receptors (ITPR) of cardiomyocytes, thereby causing an increase in the contraction frequency of these cells. This is Toxin BmCa-1 from Olivierus martensii (Manchurian scorpion).